The following is a 439-amino-acid chain: tRNA modification GTPase MnmE (439 aa).

(6S)-5-formyl-5,6,7,8-tetrahydrofolate-binding residues include R20, E78, and K116. In terms of domain architecture, TrmE-type G spans 211 to 364; the sequence is GIYVAILGEP…LLSAIQKKVE (154 aa). GTP-binding positions include 221 to 226, 240 to 246, and 265 to 268; these read NSGKST, SEYAGTT, and DTAG. Mg(2+)-binding residues include S225 and T246. Residue K439 participates in (6S)-5-formyl-5,6,7,8-tetrahydrofolate binding.

The protein belongs to the TRAFAC class TrmE-Era-EngA-EngB-Septin-like GTPase superfamily. TrmE GTPase family. Homodimer. Heterotetramer of two MnmE and two MnmG subunits. The cofactor is K(+).

It localises to the cytoplasm. Exhibits a very high intrinsic GTPase hydrolysis rate. Involved in the addition of a carboxymethylaminomethyl (cmnm) group at the wobble position (U34) of certain tRNAs, forming tRNA-cmnm(5)s(2)U34. The protein is tRNA modification GTPase MnmE of Ehrlichia ruminantium (strain Gardel).